Reading from the N-terminus, the 537-residue chain is Sodium/hydrogen exchanger 9B2 (537 aa).

Residues 1–10 (MGDEDKRITY) show a composition bias toward basic and acidic residues. Residues 1–33 (MGDEDKRITYEDSEPSTGMNYTPSMHQETQEET) are disordered. The Cytoplasmic segment spans residues 1–86 (MGDEDKRITY…ACPPHGLLDR (86 aa)). The segment covering 15 to 27 (PSTGMNYTPSMHQ) has biased composition (polar residues). Phosphoserine is present on serine 49. A helical membrane pass occupies residues 87 to 104 (VVTNVTIIVLLWAVIWSI). The Extracellular segment spans residues 105–113 (TGSECLPGG). Residues 114 to 133 (NLFGIIILFYCAIIGGKLLG) traverse the membrane as a helical segment. Residues 134–144 (LIKLPTLPPLP) lie on the Cytoplasmic side of the membrane. A helical membrane pass occupies residues 145 to 161 (SLLGMLLAGFLIRNIPV). Residues 162–171 (INDNVQIKHK) are Extracellular-facing. A helical membrane pass occupies residues 172 to 189 (WSSSLRSIALSIILVRAG). The Cytoplasmic portion of the chain corresponds to 190–200 (LGLDSKALKKL). A helical membrane pass occupies residues 201-227 (KGVCVRLSMGPCIVEACTSALLAHYLL). Topologically, residues 228–233 (GLPWQW) are extracellular. Residues 234–242 (GFILGFVLG) form a helical membrane-spanning segment. The Cytoplasmic portion of the chain corresponds to 243–270 (AVSPAVVVPSMLLLQGGGYGVEKGVPTL). Residues valine 244, glycine 275, aspartate 278, and aspartate 279 each coordinate Na(+). The chain crosses the membrane as a helical span at residues 271–290 (LMAAGSFDDILAITGFNTCL). At 291–300 (GIAFSTGSTV) the chain is on the extracellular side. Residues 301–324 (FNVLRGVLEVVIGVATGSVLGFFI) traverse the membrane as a helical segment. The Cytoplasmic segment spans residues 325–339 (QYFPSCDQDKLVCKR). A helical membrane pass occupies residues 340–357 (TFLVLGLSVLAVFSSVHF). Residues 358 to 361 (GFPG) are Extracellular-facing. A helical membrane pass occupies residues 362–373 (SGGLCTLVMAFL). Topologically, residues 374–390 (AGMGWTSEKAEVEKIIA) are cytoplasmic. Residues 391–411 (VAWDIFQPLLFGLIGAEVSIA) traverse the membrane as a helical segment. The Extracellular portion of the chain corresponds to 412–417 (SLRPET). Residues 418–440 (VGLCVATVGIAVLIRILTTFLMV) traverse the membrane as a helical segment. Residues 441-461 (CFAGFNLKEKIFISFAWLPKA) lie on the Cytoplasmic side of the membrane. A helical membrane pass occupies residues 462-473 (TVQAAIGSVALD). Residues 474–486 (TARSHGEKQLEDY) are Extracellular-facing. The chain crosses the membrane as a helical span at residues 487-509 (GMDVLTVAFLSILITAPIGSLLI). At 510–537 (GLLGPRLLQKVEHQNKDEEVQGETSVQV) the chain is on the cytoplasmic side.

Belongs to the monovalent cation:proton antiporter 1 (CPA1) transporter (TC 2.A.36) family. In terms of assembly, homodimer; dimerization is essential for SLC9B2 activity. Lipids seem to play a role in the stabilization of the dimerization subdomain.

Its subcellular location is the cell membrane. The protein localises to the mitochondrion membrane. It is found in the endosome membrane. It localises to the recycling endosome membrane. The protein resides in the cytoplasmic vesicle. Its subcellular location is the secretory vesicle. The protein localises to the synaptic vesicle membrane. It is found in the basolateral cell membrane. It localises to the apical cell membrane. It catalyses the reaction Li(+)(out) + H(+)(in) = Li(+)(in) + H(+)(out). The catalysed reaction is Li(+)(in) + Na(+)(out) = Li(+)(out) + Na(+)(in). It carries out the reaction Na(+)(in) + H(+)(out) = Na(+)(out) + H(+)(in). Allosterically inhibited by the N-terminal domain. Inhibited by phloretin. In terms of biological role, electroneutral Na(+) Li(+)/H(+) antiporter that extrudes Na(+) or Li(+) in exchange for external protons across the membrane. Uses the proton gradient/membrane potential to extrude sodium. Contributes to the regulation of intracellular pH and sodium homeostasis. Also able to mediate Na(+)/Li(+) antiporter activity in kidney. May play a physiological role in renal tubular function and blood pressure homeostasis. Plays an important role for insulin secretion and clathrin-mediated endocytosis in beta-cells. Involved in sperm motility and fertility. It is controversial whether SLC9B2 plays a role in osteoclast differentiation or not. This is Sodium/hydrogen exchanger 9B2 (SLC9B2) from Pongo abelii (Sumatran orangutan).